We begin with the raw amino-acid sequence, 217 residues long: Uracil-DNA glycosylase (217 aa).

The active-site Proton acceptor is Asp-62.

Belongs to the uracil-DNA glycosylase (UDG) superfamily. UNG family.

The protein resides in the cytoplasm. It carries out the reaction Hydrolyzes single-stranded DNA or mismatched double-stranded DNA and polynucleotides, releasing free uracil.. Functionally, excises uracil residues from the DNA which can arise as a result of misincorporation of dUMP residues by DNA polymerase or due to deamination of cytosine. The polypeptide is Uracil-DNA glycosylase (Streptococcus equi subsp. zooepidemicus (strain MGCS10565)).